Reading from the N-terminus, the 292-residue chain is T-box transcription factor tbx-9 (292 aa).

A DNA-binding region (T-box) is located at residues 10-194; it reads GSQETLWKIF…HNSFAKGFRD (185 aa). Disordered stretches follow at residues 192–227 and 265–292; these read FRDGNLSRKRRSPSYSDGSNSQSPSPKSRSPPEVAP and STPSSSSSELSIVKEEDQEVEEDIDIVG. Composition is skewed to low complexity over residues 204–223 and 265–275; these read PSYSDGSNSQSPSPKSRSPP and STPSSSSSELS. A compositionally biased stretch (acidic residues) spans 280–292; sequence EDQEVEEDIDIVG.

It is found in the nucleus. Its function is as follows. Transcription factor. Involved in the control of early morphogenesis of the intestine, hypodermis and body-wall muscle. Involved in regulating expression of vab-7. Appears to have partially redundant function to tbx-8. Positively modulates expression of homeobox protein lin-39, perhaps by binding to regulatory regions of the lin-39 gene, acting in the vulval lineage. The chain is T-box transcription factor tbx-9 (tbx-9) from Caenorhabditis elegans.